A 468-amino-acid polypeptide reads, in one-letter code: FAD-linked oxidoreductase hasG (468 aa).

Residues 37-211 (LGKIPAAVVQ…VEATFRAYPW (175 aa)) form the FAD-binding PCMH-type domain.

The protein belongs to the oxygen-dependent FAD-linked oxidoreductase family. Requires FAD as cofactor.

It functions in the pathway secondary metabolite biosynthesis. FAD-linked oxidoreductase; part of the gene cluster that mediates the biosynthesis of hexadehydro-astechrome (HAS), a tryptophan-derived iron(III)-complex that acts as a virulence factor in infected mice. Within the pathway, hasG converts the prenyl to a methylbutadienyl side chain. The HAS biosynthesis begins with the synthesis of a tethered Trp-Ala dipeptide by the NRPS hasD. The 7-dimethylallyltryptophan synthase hasE then catalyzes the prenylation of the hasD-tethered tryptophan or the resulting tethered Trp-Ala dipeptide at the C-7 position of the indole moiety. HAS biosynthesis continues via tethered intermediates with the succesive actions of the cytochrome P450 monooxygenase hasH, the O-methyltransferase hasC, and the FAD-linked oxidoreductase hasG. The resulting O-methylated diketopiperazine is then released from hasD. Finally, three O-methylated diketopiperazine molecules assemble in a trimeric complex with Fe(III) to produce hexadehydro-astechrome. The polypeptide is FAD-linked oxidoreductase hasG (Aspergillus fumigatus (strain CBS 144.89 / FGSC A1163 / CEA10) (Neosartorya fumigata)).